The chain runs to 271 residues: Aminodeoxychorismate lyase (271 aa).

At K140 the chain carries N6-(pyridoxal phosphate)lysine.

It belongs to the class-IV pyridoxal-phosphate-dependent aminotransferase family. In terms of assembly, homodimer. It depends on pyridoxal 5'-phosphate as a cofactor.

It catalyses the reaction 4-amino-4-deoxychorismate = 4-aminobenzoate + pyruvate + H(+). Its pathway is cofactor biosynthesis; tetrahydrofolate biosynthesis; 4-aminobenzoate from chorismate: step 2/2. Functionally, involved in the biosynthesis of p-aminobenzoate (PABA), a precursor of tetrahydrofolate. Converts 4-amino-4-deoxychorismate into 4-aminobenzoate (PABA) and pyruvate. The sequence is that of Aminodeoxychorismate lyase (pabC) from Vibrio harveyi (Beneckea harveyi).